Reading from the N-terminus, the 860-residue chain is Leucine--tRNA ligase (860 aa).

The 'HIGH' region motif lies at 42–52 (PYPSGRLHMGH). A 'KMSKS' region motif is present at residues 619–623 (KMSKS). Lys622 lines the ATP pocket.

It belongs to the class-I aminoacyl-tRNA synthetase family.

Its subcellular location is the cytoplasm. The enzyme catalyses tRNA(Leu) + L-leucine + ATP = L-leucyl-tRNA(Leu) + AMP + diphosphate. This chain is Leucine--tRNA ligase, found in Edwardsiella ictaluri (strain 93-146).